The sequence spans 252 residues: Pyridoxine 5'-phosphate synthase (252 aa).

Asparagine 7 is a 3-amino-2-oxopropyl phosphate binding site. 9-10 (DH) is a binding site for 1-deoxy-D-xylulose 5-phosphate. Residue arginine 18 participates in 3-amino-2-oxopropyl phosphate binding. Histidine 43 serves as the catalytic Proton acceptor. 2 residues coordinate 1-deoxy-D-xylulose 5-phosphate: arginine 45 and histidine 50. Glutamate 70 functions as the Proton acceptor in the catalytic mechanism. Threonine 100 serves as a coordination point for 1-deoxy-D-xylulose 5-phosphate. Catalysis depends on histidine 190, which acts as the Proton donor. Residues glycine 191 and 212 to 213 (GH) each bind 3-amino-2-oxopropyl phosphate.

The protein belongs to the PNP synthase family. As to quaternary structure, homooctamer; tetramer of dimers.

The protein localises to the cytoplasm. The enzyme catalyses 3-amino-2-oxopropyl phosphate + 1-deoxy-D-xylulose 5-phosphate = pyridoxine 5'-phosphate + phosphate + 2 H2O + H(+). The protein operates within cofactor biosynthesis; pyridoxine 5'-phosphate biosynthesis; pyridoxine 5'-phosphate from D-erythrose 4-phosphate: step 5/5. Functionally, catalyzes the complicated ring closure reaction between the two acyclic compounds 1-deoxy-D-xylulose-5-phosphate (DXP) and 3-amino-2-oxopropyl phosphate (1-amino-acetone-3-phosphate or AAP) to form pyridoxine 5'-phosphate (PNP) and inorganic phosphate. The sequence is that of Pyridoxine 5'-phosphate synthase from Synechococcus sp. (strain RCC307).